Reading from the N-terminus, the 274-residue chain is Sulfur carrier protein FdhD (274 aa).

Catalysis depends on cysteine 121, which acts as the Cysteine persulfide intermediate. 258–263 (FSKPGR) is a binding site for Mo-bis(molybdopterin guanine dinucleotide).

It belongs to the FdhD family.

It is found in the cytoplasm. Its function is as follows. Required for formate dehydrogenase (FDH) activity. Acts as a sulfur carrier protein that transfers sulfur from IscS to the molybdenum cofactor prior to its insertion into FDH. The sequence is that of Sulfur carrier protein FdhD from Yersinia pseudotuberculosis serotype O:1b (strain IP 31758).